The primary structure comprises 381 residues: Pectin lyase 1 (381 aa).

The first 20 residues, 1-20 (MKYASFIAAAAAALASAVSA), serve as a signal peptide directing secretion. Intrachain disulfides connect Cys83-Cys102 and Cys92-Cys227. The N-linked (GlcNAc...) asparagine glycan is linked to Asn130. Arg257 is an active-site residue. A disulfide bridge connects residues Cys324 and Cys332.

Belongs to the polysaccharide lyase 1 family.

The protein localises to the secreted. The enzyme catalyses Eliminative cleavage of (1-&gt;4)-alpha-D-galacturonan methyl ester to give oligosaccharides with 4-deoxy-6-O-methyl-alpha-D-galact-4-enuronosyl groups at their non-reducing ends.. In terms of biological role, pectinolytic enzymes consist of four classes of enzymes: pectin lyase, polygalacturonase, pectin methylesterase and rhamnogalacturonase. Among pectinolytic enzymes, pectin lyase is the most important in depolymerization of pectin, since it cleaves internal glycosidic bonds of highly methylated pectins. This is Pectin lyase 1 (pel1) from Aspergillus oryzae (strain ATCC 42149 / RIB 40) (Yellow koji mold).